The sequence spans 1004 residues: MGLPLPLLLLLLLPPPLPRALPAPASARGRQLPGRLGCLFEDGLCGSLETCVNDGVFGRCQKVPALDTYRYEVSPGALLHLRIILQKLSRTGFTWQDDYTQRVIAQELSNLPKAYLWHEEASSPARSLQQNADNEKWFSLESEVALAKTLRRYLPYLELLSQAPTANAHPRIDHETRPVKGEDSSPENILTYVAHTSALTYPPATRVKYPDNLLRPLSRLQPDELSPKVDSDIDKQKLIAALGAYTAQRPPGENDPEPRYLVHSPMRAPRPFAAPALSQRWPLPPGDSKDSLSMGDDTLLRSLLKDLQQQAEVDRLGSLKLEEQADSIAGAIQSDPVEGSQESHGRGAEGQLREQADAPEEMLQDHRLPEVDDPAAYKEVSRLSFKLGDLLKDHGSPLLPEAPLLEKSSRAEMKKSEQPEEVLSSEEETAGVEHVKSRTYSKDLLERKPNSEPQPWRLEDQFQNRAPEVWEDEQNLKLAAQGPPSGGLQLEVQPSEEEQQGYILTGNNPLSPEKGKQLMDEVAHLLRVPSSFFADVKVLGPAVIFKVSANIQNMTTADVTKAAVDNKDELEKATGLTILQSGIRPKGKLKLLPHPEEQEDSTKFIVLTFLSIACILAVLLASSLAYCLRHNSHYKLKEKLSGLGADPSADATEAYQELCRQRMAVRPQDHSEGPHTSRINSVSSQLSDGPMPSPSARSSTSSWSEEPAQSNMDISTGHMILAYMEDHLKNKNRLEKEWEALCAYQAEPDSSLVAQREENAPKNRSLAVLTYDHSRILLKSENSHSNSDYINASPIMDHDPRNPAYIATQGPLPATVADFWQMVWESGCAVIVMLTPLSENGVRQCHHYWPDEGSNVYHVYEVNLVSEHIWCQDFLVRSFYLKNLQTNETRTVTQFHFLSWYDQGVPSSTRSLLDFRRKVNKCYRGRSCPIIVHCSDGAGRSGTYVLIDMVLNKMAKGAKEIDIAATLEHLRDQRPGMVQTKEQFEFALTAVAEEVNAILKALPQ.

The first 27 residues, 1–27 (MGLPLPLLLLLLLPPPLPRALPAPASA), serve as a signal peptide directing secretion. The tract at residues 1-409 (MGLPLPLLLL…PEAPLLEKSS (409 aa)) is involved in localization to secretory granules; interaction with CPE. Over 28–603 (RGRQLPGRLG…HPEEQEDSTK (576 aa)) the chain is Extracellular. At Arg259 the chain carries Omega-N-methylarginine. Disordered regions lie at residues 274 to 294 (APALSQRWPLPPGDSKDSLSM), 333 to 360 (QSDPVEGSQESHGRGAEGQLREQADAPE), and 393 to 459 (DHGS…WRLE). Residue Ser340 is modified to Phosphoserine. Composition is skewed to basic and acidic residues over residues 341–356 (QESHGRGAEGQLREQA) and 407–418 (KSSRAEMKKSEQ). Positions 419-430 (PEEVLSSEEETA) are enriched in acidic residues. 2 positions are modified to phosphoserine: Ser424 and Ser425. Residues 431-450 (GVEHVKSRTYSKDLLERKPN) are compositionally biased toward basic and acidic residues. Asn553 carries an N-linked (GlcNAc...) asparagine glycan. The chain crosses the membrane as a helical span at residues 604 to 624 (FIVLTFLSIACILAVLLASSL). Over 625-1004 (AYCLRHNSHY…VNAILKALPQ (380 aa)) the chain is Cytoplasmic. Positions 655-664 (YQELCRQRMA) match the Tyrosine-based internalization motif motif. The disordered stretch occupies residues 665 to 710 (VRPQDHSEGPHTSRINSVSSQLSDGPMPSPSARSSTSSWSEEPAQS). Residues 677-687 (SRINSVSSQLS) are compositionally biased toward polar residues. Ser681 is subject to Phosphoserine; by PKA. Ser687 is subject to Phosphoserine. Over residues 694-710 (PSARSSTSSWSEEPAQS) the composition is skewed to low complexity. Residue Thr700 is modified to Phosphothreonine; by PKA. In terms of domain architecture, Tyrosine-protein phosphatase spans 734–994 (LEKEWEALCA…EFALTAVAEE (261 aa)). Substrate contacts are provided by residues Asp902 and 934 to 940 (CSDGAGR). Cys934 acts as the Phosphocysteine intermediate in catalysis. Lys959 is subject to N6-acetyllysine. Substrate is bound at residue Gln979. A Leucine-based sorting signal motif is present at residues 993 to 999 (EEVNAIL).

The protein belongs to the protein-tyrosine phosphatase family. Receptor class 8 subfamily. As to quaternary structure, self-associates. Interacts (via cytoplasmic domain) with PTPRN (via cytoplasmic domain). Interacts (precursor form) with CPE. Interacts with HAP1. Interacts with AP2A1 or AP2A2 and AP1G1; indicative for an association with adaptor protein complex 2 (AP-2) and adaptor protein complex 1 (AP-1). Interacts with AP2M1; indicative for an association with adaptor protein complex 2 (AP-2). Interacts with MYO5A. Subject to proteolytic cleavage at multiple sites.

The protein localises to the cytoplasmic vesicle. It localises to the secretory vesicle membrane. The protein resides in the secretory vesicle. Its subcellular location is the synaptic vesicle membrane. It catalyses the reaction O-phospho-L-tyrosyl-[protein] + H2O = L-tyrosyl-[protein] + phosphate. Plays a role in vesicle-mediated secretory processes. Required for normal accumulation of secretory vesicles in hippocampus, pituitary and pancreatic islets. Required for the accumulation of normal levels of insulin-containing vesicles and preventing their degradation. Plays a role in insulin secretion in response to glucose stimuli. Required for normal accumulation of the neurotransmitters norepinephrine, dopamine and serotonin in the brain. In females, but not in males, required for normal accumulation and secretion of pituitary hormones, such as luteinizing hormone (LH) and follicle-stimulating hormone (FSH). Required to maintain normal levels of renin expression and renin release. May regulate catalytic active protein-tyrosine phosphatases such as PTPRA through dimerization. Has phosphatidylinositol phosphatase activity; the PIPase activity is involved in its ability to regulate insulin secretion. Can dephosphorylate phosphatidylinositol 4,5-biphosphate, phosphatidylinositol 5-phosphate and phosphatidylinositol 3-phosphate. Regulates PI(4,5)P2 level in the plasma membrane and localization of cofilin at the plasma membrane and thus is indirectly involved in regulation of actin dynamics related to cell migration and metastasis; upon hydrolysis of PI(4,5)P2 cofilin is released from the plasma membrane and acts in the cytoplasm in severing F-actin filaments. The chain is Receptor-type tyrosine-protein phosphatase N2 (Ptprn2) from Rattus norvegicus (Rat).